Consider the following 51-residue polypeptide: UPF0320 protein YOL166W-A (51 aa).

This sequence belongs to the UPF0320 family.

This Saccharomyces cerevisiae (strain ATCC 204508 / S288c) (Baker's yeast) protein is UPF0320 protein YOL166W-A.